The sequence spans 351 residues: Probable aldo-keto reductase 2 (351 aa).

The active-site Proton donor is tyrosine 67. A substrate-binding site is contributed by histidine 134. 213–223 (SPLGRGFFSAG) provides a ligand contact to NADP(+). The interval 317-351 (YASTDDVRGDRYPQAMANTTWQNSETPPLSSWKAQ) is disordered. The segment covering 332–351 (MANTTWQNSETPPLSSWKAQ) has biased composition (polar residues).

The protein belongs to the aldo/keto reductase family.

The sequence is that of Probable aldo-keto reductase 2 from Oryza sativa subsp. indica (Rice).